A 1148-amino-acid polypeptide reads, in one-letter code: Minor outer capsid protein P2 (1148 aa).

The PPPDE domain maps to 930 to 1148; that stretch reads QDGTANIFQK…QYIQSIYDEL (219 aa). Catalysis depends on residues His-954 and Cys-1111.

Belongs to the phytoreovirus minor outer capsid protein P2 family.

It localises to the virion. The protein localises to the host cytoplasm. Minor capsid protein present in the outer capsid, which is required for adsorption of the virus onto host insect cells. The polypeptide is Minor outer capsid protein P2 (Nephotettix cincticeps (Green rice leafhopper)).